The primary structure comprises 504 residues: Maturase K (504 aa).

Belongs to the intron maturase 2 family. MatK subfamily.

The protein localises to the plastid. The protein resides in the chloroplast. Functionally, usually encoded in the trnK tRNA gene intron. Probably assists in splicing its own and other chloroplast group II introns. This Nepenthes distillatoria (Pitcher plant) protein is Maturase K.